Consider the following 359-residue polypeptide: MIALPQDRMDQLLKRFSMIESQMANNPDSDTYVKLASEYSELQDVVGKIRELSDARMEASDLAAMRDDASTDAEMRALAVEELPEVEKRIAVLEQDVQILLLPKDAADDKNAILEIRAGTGGLEAALFAGDLFRMYERYAAEKGWRVELVSASEGDAGGYKEIIATVSGKGVFSKLKFESGVHRVQRVPETEAGGRIHTSAATVAVLPEAEDIDIEIRNEDIRIDTMRASGAGGQHVNTTDSAVRITHIPTGIMVVQAEKSQHQNRARAMQILRARLYDMERQKAESERSQARRSQVGSGDRSERIRTYNFPQGRVTDHRINLTLYKLDRVMEGELDELVDALISDHQTALLAELGEQP.

Position 235 is an N5-methylglutamine (Gln-235). The interval 283 to 309 (QKAESERSQARRSQVGSGDRSERIRTY) is disordered.

Belongs to the prokaryotic/mitochondrial release factor family. In terms of processing, methylated by PrmC. Methylation increases the termination efficiency of RF1.

The protein resides in the cytoplasm. Its function is as follows. Peptide chain release factor 1 directs the termination of translation in response to the peptide chain termination codons UAG and UAA. The chain is Peptide chain release factor 1 from Brucella melitensis biotype 2 (strain ATCC 23457).